An 88-amino-acid chain; its full sequence is uncharacterized protein (88 aa).

A signal peptide spans 1–22 (MGLTLKEHAEVCMALAESSASA).

This is an uncharacterized protein from Haemophilus influenzae (strain ATCC 51907 / DSM 11121 / KW20 / Rd).